Here is a 1178-residue protein sequence, read N- to C-terminus: Ubiquitin carboxyl-terminal hydrolase cyk-3 (1178 aa).

EF-hand domains lie at 28 to 60, 175 to 210, and 211 to 246; these read EEYR…GAQI, FPDS…LCRG, and PLPG…LNVP. Residues Asp-188, Asn-190, Asp-192, Gln-194, Glu-199, Asp-224, Asp-226, Asp-228, and Glu-235 each contribute to the Ca(2+) site. A DUSP domain is found at 296-410; that stretch reads ESRKMELQIV…VDSQFTRKYL (115 aa). Positions 570–1175 constitute a USP domain; sequence VGLVNYGNFC…GAYLLFYERK (606 aa). The Nucleophile role is filled by Cys-579. The segment at 681–725 is disordered; sequence SNKSLHPSPEESEGTDSNKLSDSSKKKEADKEEADEEKAERSWTE. The active-site Proton acceptor is the His-1134.

It belongs to the peptidase C19 family. In terms of tissue distribution, expressed in excretory cells, coelomocytes, head neurons, hypodermal cells, germ cells, oocytes, sperm and pharynx (at protein level).

It is found in the nucleus. It localises to the cytoplasm. Its subcellular location is the cytoskeleton. The protein localises to the microtubule organizing center. It catalyses the reaction Thiol-dependent hydrolysis of ester, thioester, amide, peptide and isopeptide bonds formed by the C-terminal Gly of ubiquitin (a 76-residue protein attached to proteins as an intracellular targeting signal).. Functionally, ubiquitin-protein hydrolase which cleaves ubiquitin from ubiquitinated proteins. Plays a role in embryo osmoregulation. Probably by regulating osmosis, controls actin redistribution in the 1-cell embryos and thus actin-dependent processes such as cytokinesis and P-granules segregation. During the first embryonic mitotic division, involved in the formation of a functional microtubule organizing center provided by the male pronucleus. Acts as a positive regulator of the mTORC1 signaling. The sequence is that of Ubiquitin carboxyl-terminal hydrolase cyk-3 from Caenorhabditis elegans.